The following is a 2523-amino-acid chain: uncharacterized protein (2523 aa).

Belongs to the mycobacterial PPE family.

Its function is as follows. Probably plays a role in host phagosome maturation arrest. This is an uncharacterized protein from Mycobacterium tuberculosis (strain ATCC 25618 / H37Rv).